The following is a 474-amino-acid chain: Nuclear receptor ROR-alpha B (474 aa).

The segment at residues serine 14–phenylalanine 89 is a DNA-binding region (nuclear receptor). 2 consecutive NR C4-type zinc fingers follow at residues cysteine 17–cysteine 37 and cysteine 53–cysteine 72. Residues aspartate 98 to glutamine 124 are compositionally biased toward basic and acidic residues. A disordered region spans residues aspartate 98–serine 144. An NR LBD domain is found at aspartate 223–leucine 461. Residues valine 450–leucine 461 are AF-2.

Belongs to the nuclear hormone receptor family.

It is found in the nucleus. Nuclear receptor that binds DNA as a monomer to ROR response elements (RORE). Required for proper cerebellum development. The protein is Nuclear receptor ROR-alpha B (rorab) of Danio rerio (Zebrafish).